The sequence spans 509 residues: Maturase K (509 aa).

The protein belongs to the intron maturase 2 family. MatK subfamily.

It localises to the plastid. The protein localises to the chloroplast. Functionally, usually encoded in the trnK tRNA gene intron. Probably assists in splicing its own and other chloroplast group II introns. The chain is Maturase K from Nicotiana paniculata.